The chain runs to 223 residues: Ubiquitin carboxyl-terminal hydrolase isozyme L1 (223 aa).

Methionine 1 is subject to N-acetylmethionine. Residues 2-221 (QLKPMEINPE…VRFSAVALCK (220 aa)) enclose the UCH catalytic domain. The interaction with ubiquitin stretch occupies residues 5–10 (PMEINP). Cysteine 90 acts as the Nucleophile in catalysis. Position 125 is a phosphoserine (serine 125). The active-site Proton donor is histidine 161. Residues 211-216 (EVRFSA) are interaction with ubiquitin. Cysteine 220 is lipidated: S-farnesyl cysteine. The propeptide at 221–223 (KAA) is removed in mature form.

The protein belongs to the peptidase C12 family. Monomer. Homodimer. Interacts with COPS5 and SNCA. O-glycosylated.

It is found in the cytoplasm. The protein resides in the endoplasmic reticulum membrane. The enzyme catalyses Thiol-dependent hydrolysis of ester, thioester, amide, peptide and isopeptide bonds formed by the C-terminal Gly of ubiquitin (a 76-residue protein attached to proteins as an intracellular targeting signal).. In terms of biological role, ubiquitin-protein hydrolase involved both in the processing of ubiquitin precursors and of ubiquitinated proteins. This enzyme is a thiol protease that recognizes and hydrolyzes a peptide bond at the C-terminal glycine of ubiquitin. Also binds to free monoubiquitin and may prevent its degradation in lysosomes. The homodimer may have ATP-independent ubiquitin ligase activity. The chain is Ubiquitin carboxyl-terminal hydrolase isozyme L1 (UCHL1) from Sus scrofa (Pig).